The primary structure comprises 440 residues: Xylose isomerase (440 aa).

Active-site residues include His101 and Asp104. Mg(2+) contacts are provided by Glu232, Glu268, His271, Asp296, Asp307, Asp309, and Asp339.

This sequence belongs to the xylose isomerase family. As to quaternary structure, homotetramer. Requires Mg(2+) as cofactor.

It is found in the cytoplasm. The catalysed reaction is alpha-D-xylose = alpha-D-xylulofuranose. The protein is Xylose isomerase of Enterobacter sp. (strain 638).